A 256-amino-acid chain; its full sequence is Imidazole glycerol phosphate synthase subunit HisF (256 aa).

Residues aspartate 11 and aspartate 130 contribute to the active site.

Belongs to the HisA/HisF family. In terms of assembly, heterodimer of HisH and HisF.

The protein localises to the cytoplasm. The enzyme catalyses 5-[(5-phospho-1-deoxy-D-ribulos-1-ylimino)methylamino]-1-(5-phospho-beta-D-ribosyl)imidazole-4-carboxamide + L-glutamine = D-erythro-1-(imidazol-4-yl)glycerol 3-phosphate + 5-amino-1-(5-phospho-beta-D-ribosyl)imidazole-4-carboxamide + L-glutamate + H(+). It functions in the pathway amino-acid biosynthesis; L-histidine biosynthesis; L-histidine from 5-phospho-alpha-D-ribose 1-diphosphate: step 5/9. In terms of biological role, IGPS catalyzes the conversion of PRFAR and glutamine to IGP, AICAR and glutamate. The HisF subunit catalyzes the cyclization activity that produces IGP and AICAR from PRFAR using the ammonia provided by the HisH subunit. The chain is Imidazole glycerol phosphate synthase subunit HisF from Cupriavidus taiwanensis (strain DSM 17343 / BCRC 17206 / CCUG 44338 / CIP 107171 / LMG 19424 / R1) (Ralstonia taiwanensis (strain LMG 19424)).